A 361-amino-acid polypeptide reads, in one-letter code: tRNA-specific 2-thiouridylase MnmA (361 aa).

ATP is bound by residues 6–13 (LVSGGVDS) and I32. Positions 93–95 (NPD) are interaction with target base in tRNA. The Nucleophile role is filled by C98. C98 and C193 are joined by a disulfide. G121 contributes to the ATP binding site. Residues 143–145 (KDQ) are interaction with tRNA. C193 acts as the Cysteine persulfide intermediate in catalysis.

The protein belongs to the MnmA/TRMU family.

It is found in the cytoplasm. The enzyme catalyses S-sulfanyl-L-cysteinyl-[protein] + uridine(34) in tRNA + AH2 + ATP = 2-thiouridine(34) in tRNA + L-cysteinyl-[protein] + A + AMP + diphosphate + H(+). Functionally, catalyzes the 2-thiolation of uridine at the wobble position (U34) of tRNA, leading to the formation of s(2)U34. In Porphyromonas gingivalis (strain ATCC BAA-308 / W83), this protein is tRNA-specific 2-thiouridylase MnmA.